Consider the following 558-residue polypeptide: Small ribosomal subunit protein bS1 (558 aa).

S1 motif domains lie at 21–87 (GSII…LSRE), 105–171 (SETV…VSRR), 192–260 (GMHV…LGLK), 277–347 (ETKL…LGLK), 364–434 (GVHV…LGIK), and 451–520 (GAII…LTIH).

Belongs to the bacterial ribosomal protein bS1 family.

Binds mRNA; thus facilitating recognition of the initiation point. It is needed to translate mRNA with a short Shine-Dalgarno (SD) purine-rich sequence. This Buchnera aphidicola subsp. Acyrthosiphon pisum (strain APS) (Acyrthosiphon pisum symbiotic bacterium) protein is Small ribosomal subunit protein bS1 (rpsA).